A 568-amino-acid chain; its full sequence is Urease subunit beta (568 aa).

The Urease domain occupies 131 to 568 (GGIDTHIHFI…LSLAQLYNLF (438 aa)). The Ni(2+) site is built by histidine 136, histidine 138, and lysine 219. Position 219 is an N6-carboxylysine (lysine 219). Histidine 221 is a substrate binding site. Ni(2+) contacts are provided by histidine 248 and histidine 274. Residue histidine 321 is the Proton donor of the active site. Aspartate 361 contributes to the Ni(2+) binding site.

The protein belongs to the metallo-dependent hydrolases superfamily. Urease alpha subunit family. Heterohexamer of 3 UreA (alpha) and 3 UreB (beta) subunits. It depends on Ni cation as a cofactor. In terms of processing, carboxylation allows a single lysine to coordinate two nickel ions.

The protein localises to the cytoplasm. The catalysed reaction is urea + 2 H2O + H(+) = hydrogencarbonate + 2 NH4(+). Its pathway is nitrogen metabolism; urea degradation; CO(2) and NH(3) from urea (urease route): step 1/1. The protein is Urease subunit beta of Helicobacter heilmannii.